Here is a 221-residue protein sequence, read N- to C-terminus: Probable septum site-determining protein MinC (221 aa).

It belongs to the MinC family. As to quaternary structure, interacts with MinD and FtsZ.

In terms of biological role, cell division inhibitor that blocks the formation of polar Z ring septums. Rapidly oscillates between the poles of the cell to destabilize FtsZ filaments that have formed before they mature into polar Z rings. Prevents FtsZ polymerization. The polypeptide is Probable septum site-determining protein MinC (Shewanella halifaxensis (strain HAW-EB4)).